The chain runs to 186 residues: Probable RNA 2'-phosphotransferase (186 aa).

The protein belongs to the KptA/TPT1 family.

Removes the 2'-phosphate from RNA via an intermediate in which the phosphate is ADP-ribosylated by NAD followed by a presumed transesterification to release the RNA and generate ADP-ribose 1''-2''-cyclic phosphate (APPR&gt;P). May function as an ADP-ribosylase. The chain is Probable RNA 2'-phosphotransferase from Pectobacterium carotovorum subsp. carotovorum (strain PC1).